The primary structure comprises 164 residues: NAD(P)H-quinone oxidoreductase subunit I, chloroplastic (164 aa).

2 consecutive 4Fe-4S ferredoxin-type domains span residues 55 to 84 (GRIH…VDWK) and 95 to 124 (LNYS…MTEE). Residues cysteine 64, cysteine 67, cysteine 70, cysteine 74, cysteine 104, cysteine 107, cysteine 110, and cysteine 114 each contribute to the [4Fe-4S] cluster site.

It belongs to the complex I 23 kDa subunit family. NDH is composed of at least 16 different subunits, 5 of which are encoded in the nucleus. It depends on [4Fe-4S] cluster as a cofactor.

The protein resides in the plastid. It localises to the chloroplast thylakoid membrane. It carries out the reaction a plastoquinone + NADH + (n+1) H(+)(in) = a plastoquinol + NAD(+) + n H(+)(out). The catalysed reaction is a plastoquinone + NADPH + (n+1) H(+)(in) = a plastoquinol + NADP(+) + n H(+)(out). Its function is as follows. NDH shuttles electrons from NAD(P)H:plastoquinone, via FMN and iron-sulfur (Fe-S) centers, to quinones in the photosynthetic chain and possibly in a chloroplast respiratory chain. The immediate electron acceptor for the enzyme in this species is believed to be plastoquinone. Couples the redox reaction to proton translocation, and thus conserves the redox energy in a proton gradient. This Daucus carota (Wild carrot) protein is NAD(P)H-quinone oxidoreductase subunit I, chloroplastic.